We begin with the raw amino-acid sequence, 143 residues long: Heat shock protein Hsp-16.41 (143 aa).

A sHSP domain is found at 35–140 (HNSFNFSDNI…SSRSIPINFV (106 aa)).

The protein belongs to the small heat shock protein (HSP20) family.

This chain is Heat shock protein Hsp-16.41 (hsp-16.41), found in Caenorhabditis elegans.